A 91-amino-acid polypeptide reads, in one-letter code: Large ribosomal subunit protein uL22 (91 aa).

This sequence belongs to the universal ribosomal protein uL22 family. Part of the 50S ribosomal subunit.

In terms of biological role, this protein binds specifically to 23S rRNA; its binding is stimulated by other ribosomal proteins, e.g. L4, L17, and L20. It is important during the early stages of 50S assembly. It makes multiple contacts with different domains of the 23S rRNA in the assembled 50S subunit and ribosome. Its function is as follows. The globular domain of the protein is located near the polypeptide exit tunnel on the outside of the subunit, while an extended beta-hairpin is found that lines the wall of the exit tunnel in the center of the 70S ribosome. The chain is Large ribosomal subunit protein uL22 (rplV) from Ash yellows phytoplasma.